Consider the following 343-residue polypeptide: Dual oxidase maturation factor 1 (343 aa).

The Extracellular portion of the chain corresponds to 1-24 (MATLGHTFPFYAGPKPTFPMDTTL). Residues 25–45 (ASIIMIFLTALATFIVILPGI) form a helical membrane-spanning segment. Residues 46 to 51 (RGKTRL) lie on the Cytoplasmic side of the membrane. A helical transmembrane segment spans residues 52-72 (FWLLRVVTSLFIGAAILAVNF). Residues 73-183 (SSEWSVGQVS…RLAGHYTSAM (111 aa)) are Extracellular-facing. N-linked (GlcNAc...) asparagine glycosylation is found at Asn-84, Asn-109, and Asn-121. Residues 184–204 (LWVAFLCWLLANVMLSMPVLV) traverse the membrane as a helical segment. Over 205–206 (YG) the chain is Cytoplasmic. The helical transmembrane segment at 207–227 (GYMLLATGIFQLLALLFFSMA) threads the bilayer. Residues 228-249 (TSLTSPCPLHLGASVLHTHHGP) lie on the Extracellular side of the membrane. Residues 250-270 (AFWITLTTGLLCVLLGLAMAV) form a helical membrane-spanning segment. The Cytoplasmic portion of the chain corresponds to 271–343 (AHRMQPHRLK…AHPKDPDCAL (73 aa)). The segment at 306–343 (RYRSMADSPKSQDIPLSEASSTKAYCKEAHPKDPDCAL) is disordered. The segment covering 330–343 (YCKEAHPKDPDCAL) has biased composition (basic and acidic residues).

It belongs to the DUOXA family. In terms of assembly, may interact with NUMB. As to expression, specifically expressed in thyroid gland. Also detected in esophagus.

The protein resides in the membrane. Its function is as follows. May be required for the maturation and the transport from the endoplasmic reticulum to the plasma membrane of functional DUOX1. This is Dual oxidase maturation factor 1 (DUOXA1) from Homo sapiens (Human).